The sequence spans 751 residues: Trehalose phosphorylase (751 aa).

A propeptide spanning residues 1–26 is cleaved from the precursor; that stretch reads MSTPHHQFESKSSTAIRRRLSSSVSS. The segment at 1-28 is disordered; the sequence is MSTPHHQFESKSSTAIRRRLSSSVSSKQ.

It belongs to the glycosyltransferase group 1 family. Glycosyltransferase 4 subfamily. As to quaternary structure, homodimer. Expressed in mycelia, stipes and pilei.

It carries out the reaction alpha,alpha-trehalose + phosphate = alpha-D-glucose + alpha-D-glucose 1-phosphate. In terms of biological role, reversibly catalyzes the synthesis and degradation of trehalose from glucose and alpha-D-glucose 1-phosphate. The equilibrium lies in the direction of trehalose synthesis. The sequence is that of Trehalose phosphorylase from Pleurotus sajor-caju (Oyster mushroom).